The chain runs to 150 residues: Large ribosomal subunit protein bL9 (150 aa).

This sequence belongs to the bacterial ribosomal protein bL9 family.

Functionally, binds to the 23S rRNA. The chain is Large ribosomal subunit protein bL9 from Polaromonas sp. (strain JS666 / ATCC BAA-500).